The following is a 331-amino-acid chain: Serine/threonine-protein phosphatase PP1 isozyme 7 (331 aa).

At M1 the chain carries N-acetylmethionine. Residues D60, H62, D88, and N120 each contribute to the Mn(2+) site. The active-site Proton donor is the H121. Mn(2+) contacts are provided by H169 and H244.

This sequence belongs to the PPP phosphatase family. PP-1 subfamily. It depends on Mn(2+) as a cofactor. Expressed in roots, rosettes and flowers.

It is found in the nucleus. It localises to the cytoplasm. The catalysed reaction is O-phospho-L-seryl-[protein] + H2O = L-seryl-[protein] + phosphate. The enzyme catalyses O-phospho-L-threonyl-[protein] + H2O = L-threonyl-[protein] + phosphate. Its activity is regulated as follows. Phosphatase activity is strongly reduced by the protein phosphatase inhibitor 2 (I-2). Serine/threonine-protein phosphatase that possesses phosphatase activity toward para-nitrophenyl phosphate (pNPP) in vitro. The polypeptide is Serine/threonine-protein phosphatase PP1 isozyme 7 (Arabidopsis thaliana (Mouse-ear cress)).